A 56-amino-acid chain; its full sequence is Small ribosomal subunit protein uS14 (56 aa).

Zn(2+)-binding residues include cysteine 21, cysteine 24, cysteine 39, and cysteine 42.

The protein belongs to the universal ribosomal protein uS14 family. As to quaternary structure, component of the 40S small ribosomal subunit. Zn(2+) serves as cofactor.

The protein resides in the cytoplasm. It localises to the cytosol. Its subcellular location is the rough endoplasmic reticulum. The protein is Small ribosomal subunit protein uS14 (RpS29) of Plutella xylostella (Diamondback moth).